Reading from the N-terminus, the 339-residue chain is MQTKYQYGIYIGRFQPFHLGHLRTLNLALEKAEQVIIILGSHRVAADTRNPWRSPERMAMIEACLSPQILKRVHFLTVRDWLYSDNLWLAAVQQQVLKITGGSNSVVVLGHRKDASSYYLNLFPQWDYLETGHYPDFSSTAIRGAYFEGKEGDYLDKVPPAIADYLQTFQKSERYIALCDEYQFLQAYKQAWATAPYAPTFITTDAVVVQAGHVLMVRRQAKPGLGLIALPGGFIKQNETLVEGMLRELKEETRLKVPLPVLRGSIVDSHVFDAPGRSLRGRTITHAYFIQLPGGELPAVKGGDDAQKAWWMSLADLYAQEEQIYEDHFQIIQHFVSKV.

Positions 1–183 (MQTKYQYGIY…RYIALCDEYQ (183 aa)) are NMN adenylyltransferase. One can recognise a Nudix hydrolase domain in the interval 199 to 335 (PTFITTDAVV…EDHFQIIQHF (137 aa)). A Nudix box motif is present at residues 233–254 (GFIKQNETLVEGMLRELKEETR).

This sequence in the N-terminal section; belongs to the archaeal NMN adenylyltransferase family. The cofactor is Mg(2+). Mn(2+) serves as cofactor.

It localises to the cytoplasm. It catalyses the reaction beta-nicotinamide D-ribonucleotide + ATP + H(+) = diphosphate + NAD(+). The protein operates within cofactor biosynthesis; NAD(+) biosynthesis; NAD(+) from nicotinamide D-ribonucleotide: step 1/1. Its function is as follows. The Nudix hydrolase domain is active on ADP-ribose, (2')-phospho-ADP-ribose, IDP-ribose and NADPH. This Synechocystis sp. (strain ATCC 27184 / PCC 6803 / Kazusa) protein is Bifunctional NMN adenylyltransferase/Nudix hydrolase.